Here is a 422-residue protein sequence, read N- to C-terminus: Acylglycerol kinase, mitochondrial (422 aa).

K6 is modified (N6-acetyllysine). A hydrophobic region spans residues 15 to 31; the sequence is TTAGLCLLTWGGHWLYG. Positions 58 to 199 constitute a DAGKc domain; it reads AQVKKATVFL…LDVLQIKGEK (142 aa). Positions 249–271 are disordered; sequence QASISYTGPTERPPNEPEETPVQ.

It belongs to the AGK family. As to quaternary structure, component of the TIM22 complex, which core is composed of TIMM22, associated with TIMM10 (TIMM10A and/or TIMM10B), TIMM9, AGK and TIMM29. Interacts with SMIM26. It depends on Mg(2+) as a cofactor. As to expression, highly expressed in muscle, heart, kidney and brain.

It is found in the mitochondrion inner membrane. It localises to the mitochondrion intermembrane space. It carries out the reaction a monoacylglycerol + ATP = a monoacyl-sn-glycero-3-phosphate + ADP + H(+). It catalyses the reaction a 1,2-diacyl-sn-glycerol + ATP = a 1,2-diacyl-sn-glycero-3-phosphate + ADP + H(+). The catalysed reaction is an N-acylsphing-4-enine + ATP = an N-acylsphing-4-enine 1-phosphate + ADP + H(+). The enzyme catalyses 1-(9Z-octadecenoyl)-sn-glycerol + ATP = 1-(9Z-octadecenoyl)-sn-glycero-3-phosphate + ADP + H(+). It carries out the reaction 1,2-di-(9Z-octadecenoyl)-sn-glycerol + ATP = 1,2-di-(9Z-octadecenoyl)-sn-glycero-3-phosphate + ADP + H(+). It catalyses the reaction a 1-acyl-sn-glycerol + ATP = a 1-acyl-sn-glycero-3-phosphate + ADP + H(+). The catalysed reaction is 1-hexadecanoyl-sn-glycerol + ATP = 1-hexadecanoyl-sn-glycero-3-phosphate + ADP + H(+). The enzyme catalyses a 2-acylglycerol + ATP = a 2-acyl-sn-glycerol 3-phosphate + ADP + H(+). It carries out the reaction 2-(5Z,8Z,11Z,14Z-eicosatetraenoyl)-glycerol + ATP = 2-(5Z,8Z,11Z,14Z-eicosatetraenoyl)-sn-glycero-3-phosphate + ADP + H(+). It catalyses the reaction 1-(5Z,8Z,11Z,14Z-eicosatetraenoyl)-sn-glycerol + ATP = 1-(5Z,8Z,11Z,14Z-eicosatetraenoyl)-sn-glycero-3-phosphate + ADP + H(+). The catalysed reaction is N-(hexanoyl)sphing-4-enine + ATP = N-hexanoylsphing-4-enine 1-phosphate + ADP + H(+). The protein operates within lipid metabolism; glycerolipid metabolism. Its function is as follows. Lipid kinase that can phosphorylate both monoacylglycerol and diacylglycerol to form lysophosphatidic acid (LPA) and phosphatidic acid (PA), respectively. Does not phosphorylate sphingosine. Phosphorylates ceramide. Phosphorylates 1,2-dioleoylglycerol more rapidly than 2,3-dioleoylglycerol. Independently of its lipid kinase activity, acts as a component of the TIM22 complex. The TIM22 complex mediates the import and insertion of multi-pass transmembrane proteins into the mitochondrial inner membrane by forming a twin-pore translocase that uses the membrane potential as the external driving force. In the TIM22 complex, required for the import of a subset of metabolite carriers into mitochondria, such as ANT1/SLC25A4 and SLC25A24, while it is not required for the import of TIMM23. Overexpression increases the formation and secretion of LPA, resulting in transactivation of EGFR and activation of the downstream MAPK signaling pathway, leading to increased cell growth. This Homo sapiens (Human) protein is Acylglycerol kinase, mitochondrial.